The following is a 585-amino-acid chain: Regulator of gene activity (585 aa).

Polar residues predominate over residues 42–56 (FQTDFANSYPGTANY). 3 disordered regions span residues 42-93 (FQTD…GNRN), 148-191 (GGGG…PGSK), and 349-394 (GVGG…KVTN). Over residues 58–71 (QAPQQQQQQQQQPQ) the composition is skewed to low complexity. The span at 166–184 (PSLTNARGQNDQTLPQSNP) shows a compositional bias: polar residues. Gly residues predominate over residues 349–367 (GVGGGLGSGSGSSGSGAGG). The span at 372–388 (DNSSNDKLVKSGVQTSP) shows a compositional bias: polar residues.

This sequence belongs to the CNOT2/3/5 family. As to quaternary structure, component of the CCR4-NOT complex composed of at least Pop2/Caf1-55, Ccr4, Not1, Rga/Not2, and Not3. As to expression, expressed in heterogeneous levels between adjacent germline stem cells (at protein level).

The protein resides in the cytoplasm. Component of the CCR4-NOT complex which is one of the major cellular mRNA deadenylases and is linked to various cellular processes including bulk mRNA degradation, miRNA-mediated repression, translational repression during translational initiation and general transcription regulation. Additional complex functions may be a consequence of its influence on mRNA expression. Essential for viability. Acts as a suppressor of position effect variegation (PEV) at the white locus and regulates the expression of several unrelated genes. Plays a role in germline stem cell differentiation in the ovaries. The sequence is that of Regulator of gene activity from Drosophila melanogaster (Fruit fly).